Here is a 33-residue protein sequence, read N- to C-terminus: Brevinin-2E (33 aa).

Residues Cys-27 and Cys-33 are joined by a disulfide bond.

Belongs to the frog skin active peptide (FSAP) family. Brevinin subfamily. Expressed by the skin glands.

It localises to the secreted. In terms of biological role, shows antibacterial activity against representative Gram-negative and Gram-positive bacterial species, and hemolytic activity. This Pelophylax lessonae (Pool frog) protein is Brevinin-2E.